A 306-amino-acid polypeptide reads, in one-letter code: MTMSHLLTMSELSEVEISEILKDAEDFANGKESKTTEQTFVANLFFENSTRTRFSFEVAEKRLGLDVLNFSADASSVQKGETLYDTIRTLESIGTKAVVIRHEQDRYFDELKDQVNIPILNAGDGCGNHPTQCLLDLLTIKQEFGRFEGLQIAIVGDVRHSRVARSNAEALTKLGATIYFASPEEWKDEDNTFGTYKPLDELVPEVDVMMLLRVQHERHDHYETDIMKEYHEKHGLTVEREKRMKEGSIIMHPAPVNRDVEIASELVECERSRIFKQMENGVYVRMAVLKRALPNVLGGMKHELLV.

Residues arginine 51 and threonine 52 each coordinate carbamoyl phosphate. Lysine 79 is an L-aspartate binding site. Residues arginine 101, histidine 129, and glutamine 132 each contribute to the carbamoyl phosphate site. L-aspartate contacts are provided by arginine 162 and arginine 213. 2 residues coordinate carbamoyl phosphate: alanine 254 and proline 255.

It belongs to the aspartate/ornithine carbamoyltransferase superfamily. ATCase family. As to quaternary structure, heterododecamer (2C3:3R2) of six catalytic PyrB chains organized as two trimers (C3), and six regulatory PyrI chains organized as three dimers (R2).

It carries out the reaction carbamoyl phosphate + L-aspartate = N-carbamoyl-L-aspartate + phosphate + H(+). It participates in pyrimidine metabolism; UMP biosynthesis via de novo pathway; (S)-dihydroorotate from bicarbonate: step 2/3. Functionally, catalyzes the condensation of carbamoyl phosphate and aspartate to form carbamoyl aspartate and inorganic phosphate, the committed step in the de novo pyrimidine nucleotide biosynthesis pathway. This Bacillus thuringiensis (strain Al Hakam) protein is Aspartate carbamoyltransferase catalytic subunit.